The chain runs to 272 residues: Undecaprenyl-diphosphatase (272 aa).

The next 8 helical transmembrane spans lie at 2–22 (LELIKAIFLGIVEGITEWLPI), 50–70 (VIQLGAIMAVVVLYWNKLFPF), 83–103 (FSLWIKVLAATLPAALIGVPF), 110–130 (LFYNYITVAITLIVYGVLFII), 148–168 (LGYKAVLLIGAFQVLALIPGT), 195–215 (LAIPVMFGASLLKLVKFGFAF), 220–240 (LIILLTGMIVAFAVSIFAIKF), and 250–270 (FKAFGYYRIILGLIVVLYFLA).

It belongs to the UppP family.

The protein localises to the cell membrane. The catalysed reaction is di-trans,octa-cis-undecaprenyl diphosphate + H2O = di-trans,octa-cis-undecaprenyl phosphate + phosphate + H(+). Its function is as follows. Catalyzes the dephosphorylation of undecaprenyl diphosphate (UPP). Confers resistance to bacitracin. This is Undecaprenyl-diphosphatase from Acetivibrio thermocellus (strain ATCC 27405 / DSM 1237 / JCM 9322 / NBRC 103400 / NCIMB 10682 / NRRL B-4536 / VPI 7372) (Clostridium thermocellum).